The chain runs to 398 residues: G2/mitotic-specific cyclin-B2 (398 aa).

Position 8 is a phosphothreonine (T8). Phosphoserine is present on residues S11, S77, and S92. T94 carries the phosphothreonine modification. A phosphoserine mark is found at S99, S392, and S398.

This sequence belongs to the cyclin family. Cyclin AB subfamily. In terms of assembly, interacts with the CDK1 protein kinase to form a serine/threonine kinase holoenzyme complex also known as maturation promoting factor (MPF). The cyclin subunit imparts substrate specificity to the complex.

Its function is as follows. Essential for the control of the cell cycle at the G2/M (mitosis) transition. This Macaca fascicularis (Crab-eating macaque) protein is G2/mitotic-specific cyclin-B2 (CCNB2).